We begin with the raw amino-acid sequence, 481 residues long: Heat stress transcription factor A-1b (481 aa).

Residues methionine 1–proline 16 show a composition bias toward low complexity. Positions methionine 1–asparagine 23 are disordered. A DNA-binding region spans residues valine 25–proline 119. The tract at residues alanine 138–valine 204 is hydrophobic repeat HR-A/B. Residues leucine 213 to glycine 227 show a composition bias toward polar residues. A disordered region spans residues leucine 213–aspartate 244. A Nuclear localization signal motif is present at residues asparagine 229–arginine 233. Basic and acidic residues predominate over residues leucine 234–glycine 243. Positions aspartate 418–valine 427 match the AHA motif. A Nuclear export signal motif is present at residues leucine 467–leucine 474.

This sequence belongs to the HSF family. Class A subfamily. In terms of assembly, homotrimer. Binds to HSBP. Post-translationally, exhibits temperature-dependent phosphorylation.

It is found in the cytoplasm. The protein localises to the nucleus. In terms of biological role, transcriptional activator that specifically binds DNA sequence 5'-AGAAnnTTCT-3' known as heat shock promoter elements (HSE). The sequence is that of Heat stress transcription factor A-1b (HSFA1B) from Arabidopsis thaliana (Mouse-ear cress).